The sequence spans 493 residues: Ectonucleoside triphosphate diphosphohydrolase 8 (493 aa).

Residues 1 to 7 are Cytoplasmic-facing; that stretch reads MEYKGKV. A helical membrane pass occupies residues 8 to 28; it reads VAGLLTATCVFSIIALILSAV. The Extracellular segment spans residues 29-463; the sequence is DVKDVFLPPG…ALEHVKGHEP (435 aa). N65, N79, and N133 each carry an N-linked (GlcNAc...) asparagine glycan. C76 and C100 are disulfide-bonded. Residue E166 is the Proton acceptor of the active site. N223, N234, N267, N324, N330, N361, N372, N382, and N445 each carry an N-linked (GlcNAc...) asparagine glycan. A disulfide bridge connects residues C244 and C291. C327 and C333 are joined by a disulfide. C379 and C401 are oxidised to a cystine. The helical transmembrane segment at 464–486 threads the bilayer; sequence SLWAGAISFIVLAIVAGLVAILL. Residues 487-493 are Cytoplasmic-facing; sequence QCFWKSK.

This sequence belongs to the GDA1/CD39 NTPase family. Ca(2+) serves as cofactor. Mg(2+) is required as a cofactor. Post-translationally, N-glycosylated.

Its subcellular location is the cell membrane. The enzyme catalyses a ribonucleoside 5'-triphosphate + 2 H2O = a ribonucleoside 5'-phosphate + 2 phosphate + 2 H(+). In terms of biological role, canalicular ectonucleoside NTPDase responsible for the main hepatic NTPDase activity. Ectonucleoside ATPases catalyze the hydrolysis of gamma- and beta-phosphate residues of nucleotides, playing a central role in concentration of extracellular nucleotides. This chain is Ectonucleoside triphosphate diphosphohydrolase 8 (ENTPD8), found in Gallus gallus (Chicken).